The primary structure comprises 508 residues: Photosystem II CP47 reaction center protein (508 aa).

The next 6 membrane-spanning stretches (helical) occupy residues 21–36 (SVHI…WAGS), 101–115 (IVFS…IWHW), 140–156 (GIHL…FGAF), 203–218 (IAAG…FHLS), 237–252 (VLSS…AFVV), and 457–472 (SFAL…HGAR).

The protein belongs to the PsbB/PsbC family. PsbB subfamily. As to quaternary structure, PSII is composed of 1 copy each of membrane proteins PsbA, PsbB, PsbC, PsbD, PsbE, PsbF, PsbH, PsbI, PsbJ, PsbK, PsbL, PsbM, PsbT, PsbX, PsbY, PsbZ, Psb30/Ycf12, at least 3 peripheral proteins of the oxygen-evolving complex and a large number of cofactors. It forms dimeric complexes. The cofactor is Binds multiple chlorophylls. PSII binds additional chlorophylls, carotenoids and specific lipids..

The protein localises to the plastid. Its subcellular location is the chloroplast thylakoid membrane. One of the components of the core complex of photosystem II (PSII). It binds chlorophyll and helps catalyze the primary light-induced photochemical processes of PSII. PSII is a light-driven water:plastoquinone oxidoreductase, using light energy to abstract electrons from H(2)O, generating O(2) and a proton gradient subsequently used for ATP formation. The chain is Photosystem II CP47 reaction center protein from Carica papaya (Papaya).